We begin with the raw amino-acid sequence, 179 residues long: Nucleoside-triphosphatase THEP1 (179 aa).

Residues glycine 7–threonine 14 and leucine 94–glycine 101 each bind ATP.

The protein belongs to the THEP1 NTPase family.

It catalyses the reaction a ribonucleoside 5'-triphosphate + H2O = a ribonucleoside 5'-diphosphate + phosphate + H(+). Has nucleotide phosphatase activity towards ATP, GTP, CTP, TTP and UTP. May hydrolyze nucleoside diphosphates with lower efficiency. In Thermotoga petrophila (strain ATCC BAA-488 / DSM 13995 / JCM 10881 / RKU-1), this protein is Nucleoside-triphosphatase THEP1.